Here is a 676-residue protein sequence, read N- to C-terminus: Envelope glycoprotein (676 aa).

The signal sequence occupies residues 1 to 32 (MGVTGILQLPRDRFKRTSFFLWVIILFQRTFS). Residues 33–650 (IPLGVIHNST…NDNWWTGWRQ (618 aa)) are Extracellular-facing. Asn-40 carries an N-linked (GlcNAc...) asparagine; by host glycan. Cystine bridges form between Cys-53-Cys-609, Cys-108-Cys-135, Cys-121-Cys-147, Cys-511-Cys-556, and Cys-601-Cys-608. The receptor-binding stretch occupies residues 54–201 (RDKLSSTNQL…DFFSSHPLRE (148 aa)). Asn-204, Asn-228, Asn-238, Asn-257, Asn-268, Asn-296, Asn-317, Asn-333, Asn-346, Asn-386, and Asn-413 each carry an N-linked (GlcNAc...) asparagine; by host glycan. The mucin-like region stretch occupies residues 305–485 (ELSFTVVSNG…SGKLGLITNT (181 aa)). Polar residues predominate over residues 315-335 (AKNISGQSPARTSSDPGTNTT). The tract at residues 315 to 337 (AKNISGQSPARTSSDPGTNTTTE) is disordered. Residues 373 to 391 (TSPQSLTTKPGPDNSTHNT) show a composition bias toward polar residues. 2 disordered regions span residues 373–392 (TSPQ…HNTP) and 402–479 (TQVE…SGKL). The span at 414 to 432 (DSTASDTPSATTAAGPPKA) shows a compositional bias: low complexity. Over residues 433-464 (ENTNTSKSTDFLDPATTTSPQNHSETAGNNNT) the composition is skewed to polar residues. Asn-436, Asn-454, and Asn-462 each carry an N-linked (GlcNAc...) asparagine; by host glycan. Positions 524–539 (GAAIGLAWIPYFGPAA) are fusion peptide. A coiled-coil region spans residues 554–595 (LICGLRQLANETTQALQLFLRATTELRTFSILNRKAIDFLLQ). An N-linked (GlcNAc...) asparagine; by host glycan is attached at Asn-563. Residues 615-634 (WTKNITDKIDQIIHDFVDKT) are a coiled coil. A glycan (N-linked (GlcNAc...) asparagine; by host) is linked at Asn-618. Residues 651–671 (WIPAGIGVTGVIIAVIALFCI) traverse the membrane as a helical segment. S-palmitoyl cysteine; by host attachment occurs at residues Cys-670 and Cys-672. The Cytoplasmic segment spans residues 672–676 (CKFVF).

The protein belongs to the filoviruses glycoprotein family. As to quaternary structure, homotrimer; each monomer consists of a GP1 and a GP2 subunit linked by disulfide bonds. The resulting peplomers (GP1,2) protrude from the virus surface as spikes. Interacts with host integrin alpha-V/ITGAV. Interacts with host CLEC10A. Binds also to host CD209 and CLEC4M/DC-SIGN(R). Interacts with host FOLR1. Interacts with BST2; this interaction inhibits the antiviral effect of BST2 and this allows viral release from infected cells. Interacts with host FCN1; this interaction enhances viral entry. Interacts with host TLR4; this interaction induces cell death in T-lymphocytes or proinflammatory cytokines and SOCS1 production in monocytes. In terms of assembly, interacts with host entry receptor NPC1. GP1 and GP2delta are part of GP1,2delta soluble complexes released by ectodomain shedding. In terms of processing, the signal peptide region modulates GP's high mannose glycosylation, thereby determining the efficiency of the interactions with DC-SIGN(R). Post-translationally, N-glycosylated. O-glycosylated in the mucin-like region. In terms of processing, palmitoylation of GP2 is not required for its function. Post-translationally, specific enzymatic cleavages in vivo yield mature proteins. The precursor is processed into GP1 and GP2 by host cell furin in the trans Golgi, and maybe by other host proteases, to yield the mature GP1 and GP2 proteins. The cleavage site corresponds to the furin optimal cleavage sequence [KR]-X-[KR]-R. This cleavage does not seem to be required for function. After the internalization of the virus into cell endosomes, GP1 C-terminus is removed by the endosomal proteases cathepsin B, cathepsin L, or both, leaving a 19-kDa N-terminal fragment which is further digested by cathepsin B. Proteolytic processing of GP1,2 by host ADAM17 can remove the transmembrane anchor of GP2 and leads to shedding of complexes consisting in GP1 and truncated GP2 (GP1,2delta).

It localises to the virion membrane. The protein resides in the host cell membrane. Its subcellular location is the secreted. In terms of biological role, trimeric GP1,2 complexes form the virion surface spikes and mediate the viral entry processes, with GP1 acting as the receptor-binding subunit and GP2 as the membrane fusion subunit. At later times of infection, down-regulates the expression of various host cell surface molecules that are essential for immune surveillance and cell adhesion. Down-modulates several integrins including ITGA1, ITGA2, ITGA3, ITGA4, ITGA5, ITGA6, ITGAV and ITGB1. This decrease in cell adhesion molecules may lead to cell detachment, contributing to the disruption of blood vessel integrity and hemorrhages developed during infection (cytotoxicity). Interacts with host TLR4 and thereby stimulates the differentiation and activation of monocytes leading to bystander death of T-lymphocytes. Down-regulates as well the function of host natural killer cells. Counteracts the antiviral effect of host BST2/tetherin that restricts release of progeny virions from infected cells. However, cooperates with VP40 and host BST2 to activate canonical NF-kappa-B pathway in a manner dependent on neddylation. Functions as a decoy for anti-GP1,2 antibodies thereby contributing to viral immune evasion. Interacts and activates host macrophages and dendritic cells inducing up-regulation of cytokine transcription. This effect is mediated throught activation of host TLR4. Functionally, responsible for binding to the receptor(s) on target cells. Interacts with CD209/DC-SIGN and CLEC4M/DC-SIGNR which act as cofactors for virus entry into dendritic cells (DCs) and endothelial cells. Binding to the macrophage specific lectin CLEC10A also seems to enhance virus infectivity. Interaction with FOLR1/folate receptor alpha may be a cofactor for virus entry in some cell types, although results are contradictory. Members of the Tyro3 receptor tyrosine kinase family also seem to be cell entry factors in filovirus infection. Once attached, the virions are internalized through clathrin-dependent endocytosis and/or macropinocytosis. After internalization of the virus into the endosomes of the host cell, proteolysis of GP1 by two cysteine proteases, CTSB/cathepsin B and CTSL/cathepsin L removes the glycan cap and allows GP1 binding to the host entry receptor NPC1. NPC1-binding, Ca(2+) and acidic pH induce a conformational change of GP2, which unmasks its fusion peptide and permit membranes fusion. Its function is as follows. Acts as a class I viral fusion protein. Under the current model, the protein has at least 3 conformational states: pre-fusion native state, pre-hairpin intermediate state, and post-fusion hairpin state. During viral and target cell membrane fusion, the coiled coil regions (heptad repeats) assume a trimer-of-hairpins structure, positioning the fusion peptide in close proximity to the C-terminal region of the ectodomain. The formation of this structure appears to drive apposition and subsequent fusion of viral and target cell membranes. Responsible for penetration of the virus into the cell cytoplasm by mediating the fusion of the membrane of the endocytosed virus particle with the endosomal membrane. Low pH in endosomes induces an irreversible conformational change in GP2, releasing the fusion hydrophobic peptide. In Epomops franqueti (Franquet's epauletted fruit bat), this protein is Envelope glycoprotein (GP).